We begin with the raw amino-acid sequence, 340 residues long: UDP-3-O-acylglucosamine N-acyltransferase (340 aa).

His247 functions as the Proton acceptor in the catalytic mechanism.

It belongs to the transferase hexapeptide repeat family. LpxD subfamily. As to quaternary structure, homotrimer.

It catalyses the reaction a UDP-3-O-[(3R)-3-hydroxyacyl]-alpha-D-glucosamine + a (3R)-hydroxyacyl-[ACP] = a UDP-2-N,3-O-bis[(3R)-3-hydroxyacyl]-alpha-D-glucosamine + holo-[ACP] + H(+). The protein operates within bacterial outer membrane biogenesis; LPS lipid A biosynthesis. In terms of biological role, catalyzes the N-acylation of UDP-3-O-acylglucosamine using 3-hydroxyacyl-ACP as the acyl donor. Is involved in the biosynthesis of lipid A, a phosphorylated glycolipid that anchors the lipopolysaccharide to the outer membrane of the cell. The protein is UDP-3-O-acylglucosamine N-acyltransferase of Caulobacter sp. (strain K31).